Reading from the N-terminus, the 1023-residue chain is RTX-I toxin determinant A from serotypes 5/10 (1023 aa).

3 consecutive transmembrane segments (helical) span residues 226 to 256, 297 to 326, and 367 to 406; these read NNLP…ILSN, STTA…ADKF, and INSV…SGIL. Hemolysin-type calcium-binding repeat units lie at residues 730-747, 748-765, 766-783, 784-801, 812-829, and 830-847; these read FGSR…DDEI, YGND…NDVI, HGGD…NDRL, IGGK…DDEL, LGGA…TNLF, and DGGV…KDIY.

The protein belongs to the RTX prokaryotic toxin (TC 1.C.11) family. In terms of processing, palmitoylated by ApxIC. The toxin only becomes active when modified.

It localises to the secreted. Its subcellular location is the host cell membrane. Functionally, one of the virulence factors of A.pleuropneumoniae, which has a strong hemolytic activity and is cytotoxic for alveolar macrophages and neutrophils. The sequence is that of RTX-I toxin determinant A from serotypes 5/10 (apxIA) from Actinobacillus pleuropneumoniae (Haemophilus pleuropneumoniae).